Reading from the N-terminus, the 147-residue chain is Large ribosomal subunit protein bL9 (147 aa).

The protein belongs to the bacterial ribosomal protein bL9 family.

Binds to the 23S rRNA. The chain is Large ribosomal subunit protein bL9 from Nitratiruptor sp. (strain SB155-2).